Reading from the N-terminus, the 79-residue chain is Protein S100-G (79 aa).

Serine 2 carries the N-acetylserine modification. 2 EF-hand domains span residues isoleucine 13 to asparagine 48 and lysine 45 to glutamine 79. The Ca(2+) site is built by glutamine 26 and glutamate 31. Serine 42 carries the post-translational modification Phosphoserine. Aspartate 58, asparagine 60, aspartate 62, glutamate 64, and glutamate 69 together coordinate Ca(2+).

The protein belongs to the S-100 family.

In Homo sapiens (Human), this protein is Protein S100-G (S100G).